A 369-amino-acid chain; its full sequence is Actin-related protein T3 (369 aa).

This sequence belongs to the actin family. Interacts with PFN3. Testis specific (at protein level). Expressed specifically in haploid germ cells.

The protein resides in the cytoplasm. It localises to the cytoskeleton. Its subcellular location is the nucleus. The protein is Actin-related protein T3 (Actrt3) of Mus musculus (Mouse).